A 334-amino-acid chain; its full sequence is Isopentenyl-diphosphate delta-isomerase (334 aa).

5–6 (RK) is a substrate binding site. Residues 60–62 (AMT), Ser-90, and Asn-117 each bind FMN. Gln-147 is a substrate binding site. Residue Glu-148 participates in Mg(2+) binding. Residues Lys-179, Ser-204, Thr-209, 253–255 (GVR), and 274–275 (SR) contribute to the FMN site.

This sequence belongs to the IPP isomerase type 2 family. As to quaternary structure, homooctamer. Dimer of tetramers. Requires FMN as cofactor. It depends on NADPH as a cofactor. Mg(2+) serves as cofactor.

The protein resides in the cytoplasm. The enzyme catalyses isopentenyl diphosphate = dimethylallyl diphosphate. Functionally, involved in the biosynthesis of isoprenoids. Catalyzes the 1,3-allylic rearrangement of the homoallylic substrate isopentenyl (IPP) to its allylic isomer, dimethylallyl diphosphate (DMAPP). The protein is Isopentenyl-diphosphate delta-isomerase of Streptococcus gordonii (strain Challis / ATCC 35105 / BCRC 15272 / CH1 / DL1 / V288).